Here is a 148-residue protein sequence, read N- to C-terminus: Lipoprotein MlpH (148 aa).

The N-terminal stretch at 1–17 is a signal peptide; that stretch reads MKIINILFCLFLLMLNG. C18 carries the N-palmitoyl cysteine lipid modification. The S-diacylglycerol cysteine moiety is linked to residue C18. The segment at 26–61 is disordered; the sequence is LKNNAQQTKSRRKRDLTQKEVTQEKPKSKEELLREK. Residues 40 to 61 are compositionally biased toward basic and acidic residues; sequence DLTQKEVTQEKPKSKEELLREK.

The protein belongs to the Multicopy lipoprotein (Mlp) family.

Its subcellular location is the cell outer membrane. Its function is as follows. An outer membrane protein that may participate in pathogenesis. Some human Lyme disease patients have antibodies against this protein. The Mlp proteins probably undergo intragenic recombination, generating new alleles. The protein is Lipoprotein MlpH of Borreliella burgdorferi (strain ATCC 35210 / DSM 4680 / CIP 102532 / B31) (Borrelia burgdorferi).